Consider the following 1686-residue polypeptide: Gag-Pol polyprotein (1686 aa).

A lipid anchor (N-myristoyl glycine; by host) is attached at G2. 2 disordered regions span residues 110–199 (RPVA…PLRA) and 419–486 (HKRE…RPPL). The short motif at 116-119 (PSAP) is the PTAP/PSAP motif element. The span at 137 to 151 (PTPPPYPAALPPPLA) shows a compositional bias: pro residues. The PPXY motif signature appears at 139 to 142 (PPPY). A coiled-coil region spans residues 407-444 (LQDLVKEAEKVYHKRETEEERQEREKKEAEEKERRRDR). The span at 419-442 (HKRETEEERQEREKKEAEEKERRR) shows a compositional bias: basic and acidic residues. The span at 461 to 476 (EGSTGRQTGNLSNQAK) shows a compositional bias: polar residues. The CCHC-type zinc finger occupies 489-506 (DQCAYCKEKGHWARECPR). A Peptidase A2 domain is found at 543–613 (IEFLVDTGAE…CPAPLLGRDL (71 aa)). D548 serves as the catalytic Protease; shared with dimeric partner. Residues 720-911 (LDLGVLVPCR…REVTYLGYLL (192 aa)) form the Reverse transcriptase domain. The Mg(2+) site is built by D788, D862, D863, D1161, E1199, D1220, and D1290. An RNase H type-1 domain is found at 1152-1298 (LPGVPTWYTD…ADEAAKQAAL (147 aa)). The disordered stretch occupies residues 1304–1325 (AGTTKPQEPIEPAQEKTRPREL). Residues 1316–1325 (AQEKTRPREL) are compositionally biased toward basic and acidic residues. The HHCC-type zinc-finger motif lies at 1338–1376 (HQLTHLGPEKLLQLVNRTSLLIPNLQSAVREVTSQCQAC). Residues 1393–1551 (RGDRPGVYWE…TPYEILYGGP (159 aa)) form the Integrase catalytic domain. Mg(2+)-binding residues include D1404 and D1463.

The protein belongs to the retroviral Pol polyprotein family. In terms of assembly, homohexamer; further associates as homomultimer. The virus core is composed of a lattice formed from hexagonal rings, each containing six capsid monomers. As to quaternary structure, interacts (via PPXY motif) with host NEDD4. Interacts (via PSAP motif) with host TSG101. The reverse transcriptase is a monomer (Potential). Interacts (via RNase domains) with host release factor ETF1; this interaction is essential for translational readthrough of amber codon between viral gag and pol genes, as well as for viral replication. In terms of assembly, homodimer. It depends on Mg(2+) as a cofactor. In terms of processing, specific enzymatic cleavages by the viral protease yield mature proteins. The protease is released by autocatalytic cleavage. The polyprotein is cleaved during and after budding, this process is termed maturation. Post-translationally, phosphorylated on serine residues.

It is found in the virion. The protein resides in the host cell membrane. The protein localises to the host late endosome membrane. It localises to the host endosome. Its subcellular location is the host multivesicular body. It is found in the host cytoplasm. It catalyses the reaction DNA(n) + a 2'-deoxyribonucleoside 5'-triphosphate = DNA(n+1) + diphosphate. It carries out the reaction Endonucleolytic cleavage to 5'-phosphomonoester.. Its activity is regulated as follows. Most efficiently inhibited by Amprenavir, which is able to block Gag-Pol processing in infected cells. Functionally, plays a role in budding and is processed by the viral protease during virion maturation outside the cell. During budding, it recruits, in a PPXY-dependent or independent manner, Nedd4-like ubiquitin ligases that conjugate ubiquitin molecules to Gag-Pol, or to Gag-Pol binding host factors. Interaction with HECT ubiquitin ligases probably links the viral protein to the host ESCRT pathway and facilitates release. Targets Gag and gag-pol polyproteins to the plasma membrane via a multipartite membrane binding signal, that includes its myristoylated N-terminus. Also mediates nuclear localization of the pre-integration complex. Its function is as follows. Constituent of the pre-integration complex (PIC) which tethers the latter to mitotic chromosomes. This allows the integration of the viral genome into the host DNA. In terms of biological role, forms the spherical core of the virion that encapsulates the genomic RNA-nucleocapsid complex. Functionally, involved in the packaging and encapsidation of two copies of the genome. Binds with high affinity to conserved UCUG elements within the packaging signal, located near the 5'-end of the genome. This binding is dependent on genome dimerization. Acts as a nucleic acid chaperone which is involved in rearrangement of nucleic acid secondary structures during gRNA retrotranscription. The aspartyl protease mediates proteolytic cleavages of Gag and Gag-Pol polyproteins during or shortly after the release of the virion from the plasma membrane. Cleavages take place as an ordered, step-wise cascade to yield mature proteins. This process is called maturation. Displays maximal activity during the budding process just prior to particle release from the cell. Its function is as follows. RT is a multifunctional enzyme that converts the viral dimeric RNA genome into dsDNA in the cytoplasm, shortly after virus entry into the cell. This enzyme displays a DNA polymerase activity that can copy either DNA or RNA templates, and a ribonuclease H (RNase H) activity that cleaves the RNA strand of RNA-DNA heteroduplexes in a partially processive 3' to 5' endonucleasic mode. Conversion of viral genomic RNA into dsDNA requires many steps. A tRNA binds to the primer-binding site (PBS) situated at the 5' end of the viral RNA. RT uses the 3' end of the tRNA primer to perform a short round of RNA-dependent minus-strand DNA synthesis. The reading proceeds through the U5 region and ends after the repeated (R) region which is present at both ends of viral RNA. The portion of the RNA-DNA heteroduplex is digested by the RNase H, resulting in a ssDNA product attached to the tRNA primer. This ssDNA/tRNA hybridizes with the identical R region situated at the 3' end of viral RNA. This template exchange, known as minus-strand DNA strong stop transfer, can be either intra- or intermolecular. RT uses the 3' end of this newly synthesized short ssDNA to perform the RNA-dependent minus-strand DNA synthesis of the whole template. RNase H digests the RNA template except for a polypurine tract (PPT) situated at the 5' end of the genome. It is not clear if both polymerase and RNase H activities are simultaneous. RNase H probably can proceed both in a polymerase-dependent (RNA cut into small fragments by the same RT performing DNA synthesis) and a polymerase-independent mode (cleavage of remaining RNA fragments by free RTs). Secondly, RT performs DNA-directed plus-strand DNA synthesis using the PPT that has not been removed by RNase H as primers. PPT and tRNA primers are then removed by RNase H. The 3' and 5' ssDNA PBS regions hybridize to form a circular dsDNA intermediate. Strand displacement synthesis by RT to the PBS and PPT ends produces a blunt ended, linear dsDNA copy of the viral genome that includes long terminal repeats (LTRs) at both ends. In terms of biological role, catalyzes viral DNA integration into the host chromosome, by performing a series of DNA cutting and joining reactions. This enzyme activity takes place after virion entry into a cell and reverse transcription of the RNA genome in dsDNA. The first step in the integration process is 3' processing. This step requires a complex comprising the viral genome, matrix protein and integrase. This complex is called the pre-integration complex (PIC). The integrase protein removes 2 nucleotides from each 3' end of the viral DNA, leaving recessed CA OH's at the 3' ends. In the second step that requires cell division, the PIC enters cell nucleus. In the third step, termed strand transfer, the integrase protein joins the previously processed 3' ends to the 5' ends of strands of target cellular DNA at the site of integration. The last step is viral DNA integration into host chromosome. The chain is Gag-Pol polyprotein (pol) from Hylobatidae (gibbons).